A 127-amino-acid chain; its full sequence is Fluoride-specific ion channel FluC (127 aa).

The next 4 membrane-spanning stretches (helical) occupy residues 4–24, 35–55, 71–91, and 103–123; these read TLLA…QLGV, LGTL…LAFF, TGLC…VMFL, and VLLN…LVTW. Gly75 and Thr78 together coordinate Na(+).

It belongs to the fluoride channel Fluc/FEX (TC 1.A.43) family.

The protein resides in the cell inner membrane. The enzyme catalyses fluoride(in) = fluoride(out). Its activity is regulated as follows. Na(+) is not transported, but it plays an essential structural role and its presence is essential for fluoride channel function. Fluoride-specific ion channel. Important for reducing fluoride concentration in the cell, thus reducing its toxicity. In Pectobacterium atrosepticum (strain SCRI 1043 / ATCC BAA-672) (Erwinia carotovora subsp. atroseptica), this protein is Fluoride-specific ion channel FluC.